Consider the following 153-residue polypeptide: MGNCCSFLFNNSDDIDEQTPLLNNDGIQRTPPSAEADMSLRKREEEEEWESKVYDVAKNKFIDVFSLRLRTEAPQRDPRDNIYEEVLDQIDSLNLDPKYDVAKPTEQETEFIIRKLGVLIDDINNIKLSDKEIKGKMVINLSKVQPNITGSPS.

A disordered region spans residues 16-40 (DEQTPLLNNDGIQRTPPSAEADMSL). Over residues 20 to 31 (PLLNNDGIQRTP) the composition is skewed to polar residues.

This is an uncharacterized protein from Schizosaccharomyces pombe (strain 972 / ATCC 24843) (Fission yeast).